A 320-amino-acid polypeptide reads, in one-letter code: Zinc transporter ZitB (320 aa).

Transmembrane regions (helical) follow at residues 16 to 36 (LLAAFIITATFMVAEVIGGLL), 43 to 63 (LADAGHMLTDAAALFVALVAV), 85 to 105 (AAFVNALTLILITAFIFWEAI), 117 to 137 (VPMLLVAIAGLLANIVAFWLL), 153 to 173 (LHVLGDLLGSVGAIAAAIIIL), and 180 to 200 (IDPILSILVSCLVLRSAWALL).

Belongs to the cation diffusion facilitator (CDF) transporter (TC 2.A.4) family. SLC30A subfamily.

Its subcellular location is the cell inner membrane. Functionally, involved in zinc efflux across the cytoplasmic membrane, thus reducing zinc accumulation in the cytoplasm and rendering bacteria more resistant to zinc. It may contribute to zinc homeostasis at low concentrations of zinc. The chain is Zinc transporter ZitB from Pectobacterium atrosepticum (strain SCRI 1043 / ATCC BAA-672) (Erwinia carotovora subsp. atroseptica).